A 405-amino-acid chain; its full sequence is 26S proteasome regulatory subunit 8 homolog (405 aa).

Thr2 is subject to N-acetylthreonine. 189 to 196 (GPPGTGKT) is an ATP binding site.

The protein belongs to the AAA ATPase family. As to quaternary structure, may form a homodimer or a heterodimer with a related family member. Interacts with OLA1, TMA17, and UBR1. N-acetylated by NAT1.

It is found in the cytoplasm. Its subcellular location is the nucleus. Its function is as follows. The 26S proteasome is involved in the ATP-dependent degradation of ubiquitinated proteins. The regulatory (or ATPase) complex confers ATP dependency and substrate specificity to the 26S complex. This Saccharomyces cerevisiae (strain ATCC 204508 / S288c) (Baker's yeast) protein is 26S proteasome regulatory subunit 8 homolog (RPT6).